Consider the following 128-residue polypeptide: Large ribosomal subunit protein bL21 (128 aa).

The segment at 104–128 is disordered; it reads GKKPSVGPRPKRVKAEPAPAADAAE. Residues 119-128 are compositionally biased toward low complexity; it reads EPAPAADAAE.

The protein belongs to the bacterial ribosomal protein bL21 family. In terms of assembly, part of the 50S ribosomal subunit. Contacts protein L20.

In terms of biological role, this protein binds to 23S rRNA in the presence of protein L20. In Rhodopseudomonas palustris (strain BisB5), this protein is Large ribosomal subunit protein bL21.